A 125-amino-acid chain; its full sequence is Large ribosomal subunit protein bL12 (125 aa).

Belongs to the bacterial ribosomal protein bL12 family. As to quaternary structure, homodimer. Part of the ribosomal stalk of the 50S ribosomal subunit. Forms a multimeric L10(L12)X complex, where L10 forms an elongated spine to which 2 to 4 L12 dimers bind in a sequential fashion. Binds GTP-bound translation factors.

Forms part of the ribosomal stalk which helps the ribosome interact with GTP-bound translation factors. Is thus essential for accurate translation. The sequence is that of Large ribosomal subunit protein bL12 from Thermoanaerobacter pseudethanolicus (strain ATCC 33223 / 39E) (Clostridium thermohydrosulfuricum).